We begin with the raw amino-acid sequence, 306 residues long: Ribonuclease Z (306 aa).

Positions 63, 65, 67, 68, 141, 211, and 269 each coordinate Zn(2+). D67 (proton acceptor) is an active-site residue.

Belongs to the RNase Z family. In terms of assembly, homodimer. The cofactor is Zn(2+).

It carries out the reaction Endonucleolytic cleavage of RNA, removing extra 3' nucleotides from tRNA precursor, generating 3' termini of tRNAs. A 3'-hydroxy group is left at the tRNA terminus and a 5'-phosphoryl group is left at the trailer molecule.. Functionally, zinc phosphodiesterase, which displays some tRNA 3'-processing endonuclease activity. Probably involved in tRNA maturation, by removing a 3'-trailer from precursor tRNA. The chain is Ribonuclease Z from Staphylococcus epidermidis (strain ATCC 35984 / DSM 28319 / BCRC 17069 / CCUG 31568 / BM 3577 / RP62A).